Consider the following 657-residue polypeptide: Glycogen debranching enzyme (657 aa).

Asp-336 (nucleophile) is an active-site residue. The Proton donor role is filled by Glu-371. The segment covering 458-467 has biased composition (basic and acidic residues); sequence NEANGEENRD. The segment at 458 to 479 is disordered; it reads NEANGEENRDGTNNNYSNNHGK.

This sequence belongs to the glycosyl hydrolase 13 family.

It carries out the reaction Hydrolysis of (1-&gt;6)-alpha-D-glucosidic linkages to branches with degrees of polymerization of three or four glucose residues in limit dextrin.. The protein operates within glycan degradation; glycogen degradation. Removes maltotriose and maltotetraose chains that are attached by 1,6-alpha-linkage to the limit dextrin main chain, generating a debranched limit dextrin. This Shigella sonnei (strain Ss046) protein is Glycogen debranching enzyme.